Reading from the N-terminus, the 359-residue chain is MIDKNFWQGKRVFVTGHTGFKGSWLSLWLTEMGAIVKGYALDAPTVPSLFEIVRLNDLMESHIGDIRDFEKLRNSIAEFKPEIVFHMAAQPLVRLSYEQPIETYSTNVMGTVHLLETVKQVGNIKAVVNITSDKCYDNREWVWGYRENEPMGGYDPYSNSKGCAELVASAFRNSFFNPANYEQHGVGLASVRAGNVIGGGDWAKDRLIPDILRSFENNQQVIIRNPYSIRPWQHVLEPLSGYIVVAQRLYTEGAKFSEGWNFGPRDEDAKTVEFIVDKMVTLWGDDASWLLDGENHPHEAHYLKLDCSKANMQLGWHPRWGLTETLGRIVKWHKAWIRGEDMLICSKREISDYMSATTR.

It belongs to the NAD(P)-dependent epimerase/dehydratase family. NAD(+) serves as cofactor.

It carries out the reaction CDP-D-glucose = CDP-4-dehydro-6-deoxy-D-glucose + H2O. It functions in the pathway nucleotide-sugar biosynthesis; CDP-3,6-dideoxy-D-mannose biosynthesis; CDP-3,6-dideoxy-D-mannose from CTP and alpha-D-glucose 1-phosphate: step 2/5. The protein operates within bacterial outer membrane biogenesis; LPS O-antigen biosynthesis. This is CDP-glucose 4,6-dehydratase (rfbG) from Salmonella typhimurium (strain LT2 / SGSC1412 / ATCC 700720).